The primary structure comprises 85 residues: Sec-independent protein translocase protein TatA (85 aa).

Residues 1 to 21 (MGIFDWKHWLIILIVVVLVFG) form a helical membrane-spanning segment. The disordered stretch occupies residues 43 to 85 (VNTEEGENRPAEPQTGTSAGDTLNKTQTIEGQAQKVDTPVRKD). Polar residues predominate over residues 56–73 (QTGTSAGDTLNKTQTIEG).

This sequence belongs to the TatA/E family. The Tat system comprises two distinct complexes: a TatABC complex, containing multiple copies of TatA, TatB and TatC subunits, and a separate TatA complex, containing only TatA subunits. Substrates initially bind to the TatABC complex, which probably triggers association of the separate TatA complex to form the active translocon.

The protein localises to the cell inner membrane. Functionally, part of the twin-arginine translocation (Tat) system that transports large folded proteins containing a characteristic twin-arginine motif in their signal peptide across membranes. TatA could form the protein-conducting channel of the Tat system. The chain is Sec-independent protein translocase protein TatA from Azotobacter vinelandii (strain DJ / ATCC BAA-1303).